A 355-amino-acid chain; its full sequence is NADH-quinone oxidoreductase subunit H (355 aa).

8 consecutive transmembrane segments (helical) span residues 25 to 45, 91 to 111, 126 to 146, 170 to 190, 205 to 225, 252 to 272, 290 to 310, and 330 to 350; these read IVRILVVSVVILLCVAYLILW, WLYLIAPVMTVVPAFAVWAVI, LLYAMAISSIGVYAVILAGWA, MGFALVLVLMTAGSLNLSEIV, FLSWNWLPLLPAFVVYFISGI, GMAFALFFLAEYINMIVISAL, FIPGIFWLVLKIFALLSVFIW, and VFLPVTVVWVVVVGFWMMSPL.

It belongs to the complex I subunit 1 family. NDH-1 is composed of 14 different subunits. Subunits NuoA, H, J, K, L, M, N constitute the membrane sector of the complex.

The protein localises to the cell inner membrane. It catalyses the reaction a quinone + NADH + 5 H(+)(in) = a quinol + NAD(+) + 4 H(+)(out). NDH-1 shuttles electrons from NADH, via FMN and iron-sulfur (Fe-S) centers, to quinones in the respiratory chain. The immediate electron acceptor for the enzyme in this species is believed to be ubiquinone. Couples the redox reaction to proton translocation (for every two electrons transferred, four hydrogen ions are translocated across the cytoplasmic membrane), and thus conserves the redox energy in a proton gradient. This subunit may bind ubiquinone. The protein is NADH-quinone oxidoreductase subunit H of Burkholderia lata (strain ATCC 17760 / DSM 23089 / LMG 22485 / NCIMB 9086 / R18194 / 383).